Reading from the N-terminus, the 174-residue chain is MLQEPSAAFSLRRNSFRRRSPRSNVDDRGWNPLHIKARKGDLKSVKQLLDQGMDVNALAWGPKSKGVSALHLAAEGGHIEVMDLLLERGANIDAKTWGSCGWTPLHAAAKERKREAVKFLVENGAFLADDITDTRFNPPVHYCHGLEWAYEEMKKLNSESSSSSGGDTSSSSDN.

Residues 1–13 are compositionally biased toward low complexity; that stretch reads MLQEPSAAFSLRR. The segment at 1–29 is disordered; it reads MLQEPSAAFSLRRNSFRRRSPRSNVDDRG. Position 15 is a phosphoserine (Ser-15). 3 ANK repeats span residues 28–57, 65–94, and 100–129; these read RGWNPLHIKARKGDLKSVKQLLDQGMDVNA, KGVSALHLAAEGGHIEVMDLLLERGANIDA, and CGWTPLHAAAKERKREAVKFLVENGAFLAD.

In terms of assembly, interacts with phytochrome A (PHYA), both in Pr and Pfr forms. Binds to PIF3, a repressor of photomorphogenesis in response to phytochrome-mediated light signaling; this interaction may trigger the repression of PHYA-mediated PIF3 phosphorylation. Interacts with SIGE/SIG5 in mitochondrion. Interacts with RPS9M (via C terminus). Phosphorylated by PHYA. In terms of tissue distribution, mostly expressed in flowers, cotyledons, leaves and siliques, and, to a lower extent, in roots and stems. Also detected at low levels in seedlings grown in continuous dark or light conditions. Expressed in male and female gametophytes.

It localises to the cytoplasm. Its subcellular location is the nucleus. The protein localises to the mitochondrion. In terms of biological role, promotes anthocyanin accumulation through interaction with PHYA, especially in response to far-red light, high light and sucrose treatment, probably by triggering A3G2XYLT/UF3GT expression. Required for gametophytes development as well as male-female gamete recognition during fertilization, possibly by regulating mitochondrial gene expression. Represses PHYA-mediated PIF3 phosphorylation. The polypeptide is Phytochrome-interacting ankyrin-repeat protein 2 (Arabidopsis thaliana (Mouse-ear cress)).